Here is a 243-residue protein sequence, read N- to C-terminus: Proteasome subunit beta (243 aa).

A propeptide spans 1–49 (MRTPTGDLSDGPAEELGRDQPVFGPEIGEFEHSERRAAQADGEGEMKTG) (removed in mature form; by autocatalysis). Residues 1–50 (MRTPTGDLSDGPAEELGRDQPVFGPEIGEFEHSERRAAQADGEGEMKTGT) are disordered. The span at 29-38 (EFEHSERRAA) shows a compositional bias: basic and acidic residues. The active-site Nucleophile is Thr50.

Belongs to the peptidase T1B family. In terms of assembly, the 20S proteasome core is composed of 14 alpha and 14 beta subunits that assemble into four stacked heptameric rings, resulting in a barrel-shaped structure. The two inner rings, each composed of seven catalytic beta subunits, are sandwiched by two outer rings, each composed of seven alpha subunits. The catalytic chamber with the active sites is on the inside of the barrel. Has a gated structure, the ends of the cylinder being occluded by the N-termini of the alpha-subunits. Is capped at one or both ends by the proteasome regulatory ATPase, PAN.

It localises to the cytoplasm. It catalyses the reaction Cleavage of peptide bonds with very broad specificity.. With respect to regulation, the formation of the proteasomal ATPase PAN-20S proteasome complex, via the docking of the C-termini of PAN into the intersubunit pockets in the alpha-rings, triggers opening of the gate for substrate entry. Interconversion between the open-gate and close-gate conformations leads to a dynamic regulation of the 20S proteasome proteolysis activity. Component of the proteasome core, a large protease complex with broad specificity involved in protein degradation. In Halorubrum lacusprofundi (strain ATCC 49239 / DSM 5036 / JCM 8891 / ACAM 34), this protein is Proteasome subunit beta.